The primary structure comprises 75 residues: Disintegrin CTF-II (75 aa).

The region spanning 1 to 75 is the Disintegrin domain; it reads ELLEEGEDCY…SDDCPRWNDL (75 aa). Disulfide bonds link C9-C24, C11-C19, C18-C41, C32-C38, C37-C62, and C50-C69. A Cell attachment site motif is present at residues 54-56; sequence RGD.

This sequence belongs to the venom metalloproteinase (M12B) family. P-II subfamily. P-IIa sub-subfamily. In terms of assembly, monomer (disintegrin). In terms of tissue distribution, expressed by the venom gland.

It is found in the secreted. Its function is as follows. Inhibits fibrinogen interaction with platelet receptors, and inhibits aggregation induced by ADP, thrombin, collagen and platelet-activating factor. Acts by binding to the alpha-IIb/beta-3 (ITGA2B/ITGB3) on the platelet surface. This Protobothrops flavoviridis (Habu) protein is Disintegrin CTF-II.